The sequence spans 230 residues: Orotidine 5'-phosphate decarboxylase (230 aa).

Substrate-binding positions include aspartate 11, lysine 34, 61–70 (DLKLHDIPNT), threonine 117, arginine 179, glutamine 188, glycine 208, and arginine 209. Lysine 63 serves as the catalytic Proton donor.

The protein belongs to the OMP decarboxylase family. Type 1 subfamily. Homodimer.

The catalysed reaction is orotidine 5'-phosphate + H(+) = UMP + CO2. It functions in the pathway pyrimidine metabolism; UMP biosynthesis via de novo pathway; UMP from orotate: step 2/2. Functionally, catalyzes the decarboxylation of orotidine 5'-monophosphate (OMP) to uridine 5'-monophosphate (UMP). The sequence is that of Orotidine 5'-phosphate decarboxylase from Streptococcus pyogenes serotype M1.